Here is a 209-residue protein sequence, read N- to C-terminus: Guanylate kinase (209 aa).

The region spanning 8–186 is the Guanylate kinase-like domain; the sequence is GVLYIVSAPS…ALQDLVAITR (179 aa). An ATP-binding site is contributed by 15–22; the sequence is APSGAGKT.

This sequence belongs to the guanylate kinase family.

The protein resides in the cytoplasm. The catalysed reaction is GMP + ATP = GDP + ADP. Functionally, essential for recycling GMP and indirectly, cGMP. The polypeptide is Guanylate kinase (Thiobacillus denitrificans (strain ATCC 25259 / T1)).